Reading from the N-terminus, the 1141-residue chain is DNA-directed RNA polymerase subunit beta (1141 aa).

Residues 1117 to 1141 are disordered; it reads GINISREEPPGQLDDTPDTFSRGGM.

It belongs to the RNA polymerase beta chain family. As to quaternary structure, the RNAP catalytic core consists of 2 alpha, 1 beta, 1 beta' and 1 omega subunit. When a sigma factor is associated with the core the holoenzyme is formed, which can initiate transcription.

It catalyses the reaction RNA(n) + a ribonucleoside 5'-triphosphate = RNA(n+1) + diphosphate. Its function is as follows. DNA-dependent RNA polymerase catalyzes the transcription of DNA into RNA using the four ribonucleoside triphosphates as substrates. The chain is DNA-directed RNA polymerase subunit beta from Rubrobacter xylanophilus (strain DSM 9941 / JCM 11954 / NBRC 16129 / PRD-1).